Reading from the N-terminus, the 737-residue chain is Zinc finger protein 184 (737 aa).

A KRAB domain is found at 28–99 (VTFKDVVVNF…DSCIPVGPLE (72 aa)). S117 bears the Phosphoserine mark. K185 is covalently cross-linked (Glycyl lysine isopeptide (Lys-Gly) (interchain with G-Cter in SUMO2)). 17 consecutive C2H2-type zinc fingers follow at residues 201–223 (CKCN…QRTH), 229–251 (YKCN…QRIH), 257–279 (YKCD…QRIH), 285–307 (YKCD…QRIH), 313–335 (YTCT…QKIH), 341–363 (FKCE…QKIH), 369–391 (YKCN…HMIH), 397–419 (YECN…QKTH), 425–447 (YDCA…LKIH), 453–475 (YKCS…RRIH), 481–503 (FECS…QKTH), 509–531 (YECK…ERIH), 537–559 (YQCH…KKIH), 565–587 (YKCN…KRIH), 593–615 (YACP…QKTH), 621–643 (YQCN…QRIH), and 649–671 (YKCS…RSTH). Residues 677 to 698 (YNSECPQTFSQSTYLTQHQKIH) form a C2H2-type 18; degenerate zinc finger. A C2H2-type 19 zinc finger spans residues 704–726 (LGCEDCEKAFQCHSALTKHQRLH).

This sequence belongs to the krueppel C2H2-type zinc-finger protein family.

Its subcellular location is the nucleus. Its function is as follows. May be involved in transcriptional regulation. In Mus musculus (Mouse), this protein is Zinc finger protein 184 (Zfp184).